The sequence spans 258 residues: Thiazole synthase (258 aa).

Catalysis depends on Lys100, which acts as the Schiff-base intermediate with DXP. Residues Gly161, 187-188, and 209-210 each bind 1-deoxy-D-xylulose 5-phosphate; these read AG and NS.

Belongs to the ThiG family. In terms of assembly, homotetramer. Forms heterodimers with either ThiH or ThiS.

It is found in the plastid. Its subcellular location is the chloroplast. It catalyses the reaction [ThiS sulfur-carrier protein]-C-terminal-Gly-aminoethanethioate + 2-iminoacetate + 1-deoxy-D-xylulose 5-phosphate = [ThiS sulfur-carrier protein]-C-terminal Gly-Gly + 2-[(2R,5Z)-2-carboxy-4-methylthiazol-5(2H)-ylidene]ethyl phosphate + 2 H2O + H(+). It functions in the pathway cofactor biosynthesis; thiamine diphosphate biosynthesis. Functionally, catalyzes the rearrangement of 1-deoxy-D-xylulose 5-phosphate (DXP) to produce the thiazole phosphate moiety of thiamine. Sulfur is provided by the thiocarboxylate moiety of the carrier protein ThiS. In vitro, sulfur can be provided by H(2)S. The chain is Thiazole synthase from Cyanidioschyzon merolae (strain NIES-3377 / 10D) (Unicellular red alga).